A 34-amino-acid chain; its full sequence is MSDIN-like toxin proprotein 12 (34 aa).

Positions 1 to 10 are excised as a propeptide; the sequence is MSDINATRLP. A cross-link (cyclopeptide (His-Pro)) is located at residues 11-19; it reads HPFPLGLQP. A propeptide spanning residues 20–34 is cleaved from the precursor; it reads CAGDVDNLTLTKGEG.

Belongs to the MSDIN fungal toxin family. Processed by the macrocyclase-peptidase enzyme POPB to yield a toxic cyclic nonapeptide. POPB first removes 10 residues from the N-terminus. Conformational trapping of the remaining peptide forces the enzyme to release this intermediate rather than proceed to macrocyclization. The enzyme rebinds the remaining peptide in a different conformation and catalyzes macrocyclization of the N-terminal 9 residues.

In terms of biological role, probable toxin that belongs to the MSDIN-like toxin family responsible for a large number of food poisoning cases and deaths. The sequence is that of MSDIN-like toxin proprotein 12 from Amanita bisporigera (Destroying angel).